The sequence spans 145 residues: ATP synthase epsilon chain (145 aa).

Belongs to the ATPase epsilon chain family. F-type ATPases have 2 components, CF(1) - the catalytic core - and CF(0) - the membrane proton channel. CF(1) has five subunits: alpha(3), beta(3), gamma(1), delta(1), epsilon(1). CF(0) has three main subunits: a, b and c.

It localises to the cell inner membrane. Functionally, produces ATP from ADP in the presence of a proton gradient across the membrane. The polypeptide is ATP synthase epsilon chain (Francisella tularensis subsp. holarctica (strain FTNF002-00 / FTA)).